A 243-amino-acid polypeptide reads, in one-letter code: 1-(5-phosphoribosyl)-5-[(5-phosphoribosylamino)methylideneamino] imidazole-4-carboxamide isomerase (243 aa).

The active-site Proton acceptor is D8. D128 acts as the Proton donor in catalysis.

Belongs to the HisA/HisF family.

The protein resides in the cytoplasm. The catalysed reaction is 1-(5-phospho-beta-D-ribosyl)-5-[(5-phospho-beta-D-ribosylamino)methylideneamino]imidazole-4-carboxamide = 5-[(5-phospho-1-deoxy-D-ribulos-1-ylimino)methylamino]-1-(5-phospho-beta-D-ribosyl)imidazole-4-carboxamide. It functions in the pathway amino-acid biosynthesis; L-histidine biosynthesis; L-histidine from 5-phospho-alpha-D-ribose 1-diphosphate: step 4/9. The protein is 1-(5-phosphoribosyl)-5-[(5-phosphoribosylamino)methylideneamino] imidazole-4-carboxamide isomerase of Opitutus terrae (strain DSM 11246 / JCM 15787 / PB90-1).